We begin with the raw amino-acid sequence, 1287 residues long: SCL-interrupting locus protein (1287 aa).

At Met1 the chain carries N-acetylmethionine. The interval 1–1018 (MEPIYPFARP…IDSPTKVKKN (1018 aa)) is interaction with RBM14. Residues 231–781 (YKYGYLTMDE…VSVEAQSSPG (551 aa)) form an interaction with CPAP region. Disordered regions lie at residues 378-417 (RSSQ…SQKI) and 508-533 (PPAY…PSHD). Ser395 carries the phosphoserine modification. Residues 517–529 (HTRNSIKPSSHNG) are compositionally biased toward polar residues. The segment at 584–779 (PMELQIPTPP…ELVSVEAQSS (196 aa)) is PIN1-binding. Residues Ser753, Ser779, and Ser1135 each carry the phosphoserine modification.

In terms of assembly, homodimer. Interacts with PIN1 via its WW domain. This interaction is dependent on STIL mitotic phosphorylation. Interacts with CPAP. Interacts with RBM14 and this interaction interferes with the interaction of STIL with CPAP. Forms a complex with CPAP and SASS6. Interacts (via N-terminus) with CEP85; this interaction is essential for efficient centriolar targeting of STIL and subsequent PLK4 activation. Post-translationally, ubiquitinated. Phosphorylated following the activation of the mitotic checkpoint. As to expression, expressed in all hematopoietic tissues and cell lines. Highly expressed in a variety of tumors characterized by increased mitotic activity with highest expression in lung cancer.

Its subcellular location is the cytoplasm. It is found in the cytosol. It localises to the cytoskeleton. The protein localises to the microtubule organizing center. The protein resides in the centrosome. Its subcellular location is the centriole. It is found in the cell cortex. Its function is as follows. Immediate-early gene. Plays an important role in embryonic development as well as in cellular growth and proliferation; its long-term silencing affects cell survival and cell cycle distribution as well as decreases CDK1 activity correlated with reduced phosphorylation of CDK1. Plays a role as a positive regulator of the sonic hedgehog pathway, acting downstream of PTCH1. Plays an important role in the regulation of centriole duplication. Required for the onset of procentriole formation and proper mitotic progression. During procentriole formation, is essential for the correct loading of SASS6 and CPAP to the base of the procentriole to initiate procentriole assembly. In complex with STIL acts as a modulator of PLK4-driven cytoskeletal rearrangements and directional cell motility. The polypeptide is SCL-interrupting locus protein (STIL) (Homo sapiens (Human)).